The following is a 460-amino-acid chain: Argininosuccinate lyase (460 aa).

The protein belongs to the lyase 1 family. Argininosuccinate lyase subfamily.

Its subcellular location is the cytoplasm. The catalysed reaction is 2-(N(omega)-L-arginino)succinate = fumarate + L-arginine. Its pathway is amino-acid biosynthesis; L-arginine biosynthesis; L-arginine from L-ornithine and carbamoyl phosphate: step 3/3. In Streptococcus uberis (strain ATCC BAA-854 / 0140J), this protein is Argininosuccinate lyase.